The chain runs to 425 residues: Probable G-protein coupled receptor 63 (425 aa).

Residues 1-87 lie on the Extracellular side of the membrane; the sequence is MVVSGVLTAP…VFKSLNLAVQ (87 aa). N-linked (GlcNAc...) asparagine glycans are attached at residues N22, N34, and N68. The chain crosses the membrane as a helical span at residues 88 to 112; that stretch reads IILSAIMIFILFVSFLGNLVVCLMV. The Cytoplasmic segment spans residues 113-123; that stretch reads YQKAAMRSAIN. The chain crosses the membrane as a helical span at residues 124 to 148; that stretch reads ILLASLAFADMLLAVLNMPFALVTI. The Extracellular portion of the chain corresponds to 149 to 165; that stretch reads LTTRWIFGKFFCRLSAM. A helical transmembrane segment spans residues 166–190; it reads FFWLFVIEGVAILLIISIDRFLIIV. Residues 191 to 202 lie on the Cytoplasmic side of the membrane; the sequence is QRQDKLNPYRAK. A helical transmembrane segment spans residues 203–222; the sequence is VLIAVSWATAFSVAFPLAVG. The Extracellular segment spans residues 223 to 247; the sequence is NPDLQIPSRAPQCVFGYTTNSGYQA. A helical membrane pass occupies residues 248–272; that stretch reads YVILISLISFFIPFLVILYSFMGIL. The Cytoplasmic portion of the chain corresponds to 273-321; it reads NTLRHNALRIHSYPEGICLSQASKLGLMSLQRPFQMSIDMGFKTRAFTT. Residues 322 to 345 traverse the membrane as a helical segment; that stretch reads ILILFAVFIVCWAPFTTYSLVATF. Residues 346–357 are Extracellular-facing; that stretch reads SKHFYYQHNFFE. A helical membrane pass occupies residues 358–379; it reads ISTWLLWLCYLKSALNPLIYYW. Topologically, residues 380–425 are cytoplasmic; the sequence is RIKKFHDACLDMMPKSFKFLPRLPGHTRRRIRPSAVYVCGEHRTVL.

It belongs to the G-protein coupled receptor 1 family. Brain specific.

It is found in the cell membrane. In terms of biological role, orphan receptor. May play a role in brain function. This is Probable G-protein coupled receptor 63 (Gpr63) from Mus musculus (Mouse).